A 279-amino-acid polypeptide reads, in one-letter code: MSEHFMGLSKIKTESCVHGYESAWLSRWTPSNKNAKEIHLPEDGHLLKESTGPMKLKGKMLTLFPNLDSPVQSVDVIPDMNKEPPIVADRENSIDGEEEEASSQATQSKNVEHFLNNNTNLLRECKRIWSDSETNSRSQVKRLKTNAADNRGNETKNMMVFEEGPSGKKVNHFFHSIFGMTNLGSRRYQKFSTSQNKNLNMGEAEDVNPWIQRWCKRKAADVHEPRGGQEVNSNGTVLEKQQFPSIAAMAMMRKALSGINPTGCRKTNSLFVWNAEDLS.

In terms of assembly, interacts with light-activated phyB. Binds directly to PIF1 and COP1. In terms of processing, ubiquitinated by COP1 in darkness; this leads to proteasomal degradation. In terms of tissue distribution, mainly expressed in cotyledons, hypocotyls, leaves.

Its subcellular location is the nucleus. Its function is as follows. Together with PCH1, regulates growth and development adaptation to the ambient environment by controlling negatively phytochrome B (phyB) dark reversion, a temperature-dependent thermal relaxation process during which phyB reverts from the active to the inactive state. Contributes to red (R) light-triggered photomorphogenesis. Promotes various light responses such as seed germination, hypocotyl gravitropism and chlorophyll biosynthesis, via direct interaction with PIF1 and COP1. Prevents DNA-binding ability of PIF1 to negatively regulate the expressions of its target genes. Facilitates the physical interaction between phyB and PIF1 and the subsequent light-induced degradation of PIF1. The sequence is that of Protein PHOTOPERIODIC CONTROL OF HYPOCOTYL 1-LIKE from Arabidopsis thaliana (Mouse-ear cress).